A 546-amino-acid polypeptide reads, in one-letter code: Smad protein daf-8 (546 aa).

In terms of domain architecture, MH1 spans 16–137 (AMAQKVLEET…YRWVELPTCQ (122 aa)). 2 disordered regions span residues 234-268 (LQQS…FIPN) and 292-317 (ENFS…PIEP). Polar residues predominate over residues 292-302 (ENFSSENNGNR). The 198-residue stretch at 349–546 (WLKLIYYEEG…APPRICSSRT (198 aa)) folds into the MH2 domain.

This sequence belongs to the dwarfin/SMAD family. In terms of assembly, homodimer. Interacts with R-SMAD daf-14 and co-SMAD daf-3. Interacts with orphan nuclear receptor nhr-69. In terms of tissue distribution, expressed in the excretory cell and gonadal distal tip cells (DTCs).

Its subcellular location is the cytoplasm. The protein resides in the nucleus. In terms of biological role, probably a receptor-regulated SMAD (R-SMAD) that is an intracellular signal transducer and transcriptional modulator activated by TGF-beta-like daf-7 signaling. Plays a role in TGF-beta-like daf-7 signaling in regulating entry into a developmentally arrested larval state known as dauer, in response to harsh environmental conditions; partially redundant with R-SMAD daf-14. Plays a role in inhibiting mitosis and promoting a switch to meiosis in the germ line, perhaps by down-regulating lag-2 transcription in the gonadal distal tip cells (DTCs). In cooperation with orphan nuclear receptor nhr-69 modulates the Insulin/IGF-1-like signaling (IIS) pathway, perhaps by regulating expression of the potassium channel exp-2, which in turn modulates the secretion of the insulin-like peptide daf-28. The polypeptide is Smad protein daf-8 (Caenorhabditis elegans).